A 206-amino-acid chain; its full sequence is Thiamine-phosphate synthase (206 aa).

4-amino-2-methyl-5-(diphosphooxymethyl)pyrimidine is bound by residues 35-39 (QLRHK) and Asn-67. 2 residues coordinate Mg(2+): Asp-68 and Asp-87. Ser-106 provides a ligand contact to 4-amino-2-methyl-5-(diphosphooxymethyl)pyrimidine. 132 to 134 (TGS) lines the 2-[(2R,5Z)-2-carboxy-4-methylthiazol-5(2H)-ylidene]ethyl phosphate pocket. Lys-135 contributes to the 4-amino-2-methyl-5-(diphosphooxymethyl)pyrimidine binding site. Gly-163 contacts 2-[(2R,5Z)-2-carboxy-4-methylthiazol-5(2H)-ylidene]ethyl phosphate.

Belongs to the thiamine-phosphate synthase family. Mg(2+) is required as a cofactor.

The catalysed reaction is 2-[(2R,5Z)-2-carboxy-4-methylthiazol-5(2H)-ylidene]ethyl phosphate + 4-amino-2-methyl-5-(diphosphooxymethyl)pyrimidine + 2 H(+) = thiamine phosphate + CO2 + diphosphate. The enzyme catalyses 2-(2-carboxy-4-methylthiazol-5-yl)ethyl phosphate + 4-amino-2-methyl-5-(diphosphooxymethyl)pyrimidine + 2 H(+) = thiamine phosphate + CO2 + diphosphate. It carries out the reaction 4-methyl-5-(2-phosphooxyethyl)-thiazole + 4-amino-2-methyl-5-(diphosphooxymethyl)pyrimidine + H(+) = thiamine phosphate + diphosphate. It participates in cofactor biosynthesis; thiamine diphosphate biosynthesis; thiamine phosphate from 4-amino-2-methyl-5-diphosphomethylpyrimidine and 4-methyl-5-(2-phosphoethyl)-thiazole: step 1/1. Functionally, condenses 4-methyl-5-(beta-hydroxyethyl)thiazole monophosphate (THZ-P) and 2-methyl-4-amino-5-hydroxymethyl pyrimidine pyrophosphate (HMP-PP) to form thiamine monophosphate (TMP). The polypeptide is Thiamine-phosphate synthase (Chlorobium phaeobacteroides (strain DSM 266 / SMG 266 / 2430)).